The following is a 210-amino-acid chain: MTNTEVGKTTRRARIERRTSESDIVVELDLDGTGQVHIDTGVSFYDHMLTALGSHASFDLTVCTKGDVEIEAHHTIEDTAIALGQAFGQALGNKKGIRRFGDAFIPMDETLVHAVVDVSGRPYCVHTGEPDHLQHNIISGSSVPYSTVINRHVFESLAANARIALHVRVLYGRDPHHITEAQYKAVARALSEAVKFDPRFSGVPSTKGVL.

Belongs to the imidazoleglycerol-phosphate dehydratase family.

It is found in the cytoplasm. It carries out the reaction D-erythro-1-(imidazol-4-yl)glycerol 3-phosphate = 3-(imidazol-4-yl)-2-oxopropyl phosphate + H2O. It participates in amino-acid biosynthesis; L-histidine biosynthesis; L-histidine from 5-phospho-alpha-D-ribose 1-diphosphate: step 6/9. The protein is Imidazoleglycerol-phosphate dehydratase of Mycobacterium leprae (strain Br4923).